Here is a 141-residue protein sequence, read N- to C-terminus: Succinate dehydrogenase assembly factor 2, mitochondrial (141 aa).

It belongs to the SDHAF2 family. Interacts with the flavoprotein subunit within the SDH catalytic dimer.

It is found in the mitochondrion matrix. In terms of biological role, plays an essential role in the assembly of succinate dehydrogenase (SDH), an enzyme complex (also referred to as respiratory complex II) that is a component of both the tricarboxylic acid (TCA) cycle and the mitochondrial electron transport chain, and which couples the oxidation of succinate to fumarate with the reduction of ubiquinone (coenzyme Q) to ubiquinol. Required for flavinylation (covalent attachment of FAD) of the flavoprotein subunit of the SDH catalytic dimer. The protein is Succinate dehydrogenase assembly factor 2, mitochondrial of Dictyostelium discoideum (Social amoeba).